Reading from the N-terminus, the 538-residue chain is DALR anticodon-binding domain-containing protein 3 (538 aa).

In terms of assembly, part of a complex containing tRNA(Arg) and METTL2. Interacts with tRNA(Arg)(CCU) and tRNA(Arg)(UCU). Interacts with METTL2.

Involved in tRNA methylation. Facilitates the recognition and targeting of tRNA(Arg)(CCU) and tRNA(Arg)(UCU) substrates for N(3)-methylcytidine modification by METTL2. This is DALR anticodon-binding domain-containing protein 3 (Dalrd3) from Rattus norvegicus (Rat).